A 487-amino-acid polypeptide reads, in one-letter code: N-succinylglutamate 5-semialdehyde dehydrogenase (487 aa).

Position 221 to 226 (Gly-221 to Gly-226) interacts with NAD(+). Residues Glu-244 and Cys-278 contribute to the active site.

Belongs to the aldehyde dehydrogenase family. AstD subfamily.

It catalyses the reaction N-succinyl-L-glutamate 5-semialdehyde + NAD(+) + H2O = N-succinyl-L-glutamate + NADH + 2 H(+). It participates in amino-acid degradation; L-arginine degradation via AST pathway; L-glutamate and succinate from L-arginine: step 4/5. Functionally, catalyzes the NAD-dependent reduction of succinylglutamate semialdehyde into succinylglutamate. This is N-succinylglutamate 5-semialdehyde dehydrogenase from Ectopseudomonas mendocina (strain ymp) (Pseudomonas mendocina).